The following is a 376-amino-acid chain: Succinyl-diaminopimelate desuccinylase (376 aa).

Residue His-67 coordinates Zn(2+). The active site involves Asp-69. Residue Asp-100 coordinates Zn(2+). Glu-134 serves as the catalytic Proton acceptor. Zn(2+) contacts are provided by Glu-135, Glu-163, and His-349.

The protein belongs to the peptidase M20A family. DapE subfamily. Homodimer. It depends on Zn(2+) as a cofactor. The cofactor is Co(2+).

The catalysed reaction is N-succinyl-(2S,6S)-2,6-diaminopimelate + H2O = (2S,6S)-2,6-diaminopimelate + succinate. Its pathway is amino-acid biosynthesis; L-lysine biosynthesis via DAP pathway; LL-2,6-diaminopimelate from (S)-tetrahydrodipicolinate (succinylase route): step 3/3. Catalyzes the hydrolysis of N-succinyl-L,L-diaminopimelic acid (SDAP), forming succinate and LL-2,6-diaminopimelate (DAP), an intermediate involved in the bacterial biosynthesis of lysine and meso-diaminopimelic acid, an essential component of bacterial cell walls. This Actinobacillus succinogenes (strain ATCC 55618 / DSM 22257 / CCUG 43843 / 130Z) protein is Succinyl-diaminopimelate desuccinylase.